We begin with the raw amino-acid sequence, 65 residues long: Alpha-conotoxin Mr1.1 (65 aa).

The first 21 residues, M1 to S21, serve as a signal peptide directing secretion. The propeptide occupies F22 to K48. 2 disulfide bridges follow: C50–C56 and C51–C64. The ser-Xaa-Pro motif, crucial for potent interaction with nAChR stretch occupies residues S52–P54. Residue C64 is modified to Cysteine amide.

Belongs to the conotoxin A superfamily. In terms of tissue distribution, expressed by the venom duct.

It is found in the secreted. In terms of biological role, alpha-conotoxins act on postsynaptic membranes, they bind to the nicotinic acetylcholine receptors (nAChR) and thus inhibit them. This toxin potently and reversibly inhibits alpha-9-alpha-10/CHRNA9-CHRNA10 (IC(50)=92 nM (human) and IC(50)=8.3 nM (rat)) and human alpha3-beta-2/CHRNA3-CHRNB2 nAChR (IC(50)=218.9 nM). Also moderately inhibits human alpha-3-beta-4/CHRNA3-CHRNB4 (60% inhibition at 1 uM), rat alpha-7/CHRNA7 (65% inhibition at 1 uM) and rat alpha-3-beta-2/CHRNA3-CHRNB2 nAChR (50-70% inhibition at 10 uM). In two rat pain models, this toxin shows analgesic effect. The chain is Alpha-conotoxin Mr1.1 from Conus marmoreus (Marble cone).